The sequence spans 2138 residues: DNA polymerase epsilon catalytic subunit B (2138 aa).

Positions 1224–1231 match the Nuclear localization signal 1 motif; it reads EKRKWKMT. The Zn(2+) site is built by Cys-2015, Cys-2018, Cys-2040, and Cys-2045. The segment at 2015–2045 adopts a CysA-type zinc-finger fold; sequence CSNCGAYRDLDFCRDSALLTEKEWSCADPQC. 4 residues coordinate [4Fe-4S] cluster: Cys-2076, Cys-2079, Cys-2091, and Cys-2093. Positions 2076-2093 match the CysB motif motif; the sequence is CNRCNQVKAAHLTEQCEC. A Nuclear localization signal 2 motif is present at residues 2107–2114; sequence HKRIEIFL.

It belongs to the DNA polymerase type-B family. In terms of assembly, heterotetramer. It depends on [4Fe-4S] cluster as a cofactor. Mostly expressed at low levels in inflorescence (floral meristem and flowers until anthesis), and, to a lower extent, in seeds.

It localises to the nucleus. The enzyme catalyses DNA(n) + a 2'-deoxyribonucleoside 5'-triphosphate = DNA(n+1) + diphosphate. In terms of biological role, DNA polymerase II, which participates in chromosomal DNA replication. Involved in the determination of cell fate during plant embryogenesis. Contributes to the flowering time repression. This is DNA polymerase epsilon catalytic subunit B (POL2B) from Arabidopsis thaliana (Mouse-ear cress).